The following is a 258-amino-acid chain: MEKTSKKMIGRRFEGKVAIVTASTQGIGFAIAYRLGLEGAAVVISSRKQKNVDEAVEKLKAQGIEVLGVVCHVSNSKQRKNLIDTTVKKYGKIDVVVSNAAANPSTDALLETQESVLDKIWEINVKASILLLQEAAPHLQKGSSVVLISSITGYQPPASMAMYGVTKTALLGLTKALAEEMAPYVRVNCVAPGFVPTNFADYLTRNEDIRNSLEEKTFLKRLGTTQDMASATAFLASDDASYITGETVVVAGGTPSRL.

19-43 contributes to the NAD(+) binding site; it reads IVTASTQGIGFAIAYRLGLEGAAVV. Ser150 provides a ligand contact to substrate. Tyr163 serves as the catalytic Proton acceptor.

The protein belongs to the short-chain dehydrogenases/reductases (SDR) family.

Has no tropinone reductase activity. The chain is Tropinone reductase-like 3 from Erythroxylum coca (Coca plant).